The following is a 552-amino-acid chain: Hyaluronan synthase 2 (552 aa).

Over M1–R11 the chain is Cytoplasmic. A helical transmembrane segment spans residues I12–V32. The Extracellular portion of the chain corresponds to G33–S45. A helical transmembrane segment spans residues F46 to L66. The Cytoplasmic segment spans residues E67–L374. At T110 the chain carries Phosphothreonine. A Glycyl lysine isopeptide (Lys-Gly) (interchain with G-Cter in ubiquitin) cross-link involves residue K190. O-linked (GlcNAc) serine glycosylation occurs at S221. Phosphothreonine is present on T328. The chain crosses the membrane as a helical span at residues W375–I395. At Q396–K402 the chain is on the extracellular side. The chain crosses the membrane as a helical span at residues I403 to F423. The Cytoplasmic portion of the chain corresponds to A424–G429. Residues N430–A450 traverse the membrane as a helical segment. The Extracellular segment spans residues K451–F475. The chain crosses the membrane as a helical span at residues I476–I496. The Cytoplasmic portion of the chain corresponds to Y497–T510. A helical transmembrane segment spans residues V511 to V531. The Extracellular portion of the chain corresponds to V532–V552.

The protein belongs to the NodC/HAS family. Homodimer; dimerization promotes enzymatic activity. Forms heterodimer with HAS3. Forms heterodimer with HAS1. Mg(2+) is required as a cofactor. Post-translationally, phosphorylation at Thr-328 is essential for hyaluronan synthase activity. In terms of processing, O-GlcNAcylation at Ser-221 increases the stability of HAS2 and plasma membrane localization. Ubiquitination at Lys-190; this ubiquitination is essential for hyaluronan synthase activity and homo- or hetero-oligomerization. Can also be poly-ubiquitinated. Deubiquitinated by USP17L22/USP17 and USP4. USP17L22/USP17 efficiently removes 'Lys-63'- and 'Lys-48'-linked polyubiquitin chains, whereas USP4 preferentially removes monoubiquitination and, partially, both 'Lys-63'- and 'Lys-48'-linked polyubiquitin chain. Expressed in heart, brain, spleen, lung and skeletal muscle.

Its subcellular location is the cell membrane. The protein resides in the endoplasmic reticulum membrane. It localises to the vesicle. It is found in the golgi apparatus membrane. The protein localises to the lysosome. It catalyses the reaction [hyaluronan](n) + UDP-N-acetyl-alpha-D-glucosamine = N-acetyl-beta-D-glucosaminyl-(1-&gt;4)-[hyaluronan](n) + UDP + H(+). It carries out the reaction N-acetyl-beta-D-glucosaminyl-(1-&gt;4)-[hyaluronan](n) + UDP-alpha-D-glucuronate = [hyaluronan](n+1) + UDP + H(+). It participates in glycan biosynthesis; hyaluronan biosynthesis. Catalyzes the addition of GlcNAc or GlcUA monosaccharides to the nascent hyaluronan polymer. Therefore, it is essential to hyaluronan synthesis a major component of most extracellular matrices that has a structural role in tissues architectures and regulates cell adhesion, migration and differentiation. This is one of the isozymes catalyzing that reaction and it is particularly responsible for the synthesis of high molecular mass hyaluronan. Required for the transition of endocardial cushion cells into mesenchymal cells, a process crucial for heart development. May also play a role in vasculogenesis. High molecular mass hyaluronan also play a role in early contact inhibition a process which stops cell growth when cells come into contact with each other or the extracellular matrix. In terms of biological role, catalyzes the addition of GlcNAc or GlcUA monosaccharides to the nascent hyaluronan polymer. Therefore, it is essential to hyaluronan synthesis a major component of most extracellular matrices that has a structural role in tissues architectures and regulates cell adhesion, migration and differentiation. This is one of three isoenzymes responsible for cellular hyaluronan synthesis and it is particularly responsible for the synthesis of high molecular mass hyaluronan. The chain is Hyaluronan synthase 2 from Mus musculus (Mouse).